A 188-amino-acid polypeptide reads, in one-letter code: dCTP deaminase (188 aa).

DCTP contacts are provided by residues 111–116, 135–137, Gln156, Tyr170, and Gln180; these read KSTYAR and TLE. The active-site Proton donor/acceptor is Glu137.

Belongs to the dCTP deaminase family. Homotrimer.

It carries out the reaction dCTP + H2O + H(+) = dUTP + NH4(+). The protein operates within pyrimidine metabolism; dUMP biosynthesis; dUMP from dCTP (dUTP route): step 1/2. Catalyzes the deamination of dCTP to dUTP. This Cupriavidus taiwanensis (strain DSM 17343 / BCRC 17206 / CCUG 44338 / CIP 107171 / LMG 19424 / R1) (Ralstonia taiwanensis (strain LMG 19424)) protein is dCTP deaminase.